The chain runs to 303 residues: Mycothiol acetyltransferase (303 aa).

N-acetyltransferase domains are found at residues 1-150 and 162-303; these read MALL…RPLD and VTIR…QFGR. Residue Glu18 participates in 1D-myo-inositol 2-(L-cysteinylamino)-2-deoxy-alpha-D-glucopyranoside binding. Acetyl-CoA is bound at residue 77 to 79; sequence LAV. 1D-myo-inositol 2-(L-cysteinylamino)-2-deoxy-alpha-D-glucopyranoside contacts are provided by Glu189, Lys229, and Glu237. Acetyl-CoA is bound by residues 241–243 and 248–254; these read VGV and QGNGLGR. Tyr275 contributes to the 1D-myo-inositol 2-(L-cysteinylamino)-2-deoxy-alpha-D-glucopyranoside binding site. 280–285 provides a ligand contact to acetyl-CoA; that stretch reads NTAAIK.

It belongs to the acetyltransferase family. MshD subfamily. As to quaternary structure, monomer.

The enzyme catalyses 1D-myo-inositol 2-(L-cysteinylamino)-2-deoxy-alpha-D-glucopyranoside + acetyl-CoA = mycothiol + CoA + H(+). Catalyzes the transfer of acetyl from acetyl-CoA to desacetylmycothiol (Cys-GlcN-Ins) to form mycothiol. The protein is Mycothiol acetyltransferase of Saccharopolyspora erythraea (strain ATCC 11635 / DSM 40517 / JCM 4748 / NBRC 13426 / NCIMB 8594 / NRRL 2338).